The chain runs to 134 residues: Large ribosomal subunit protein bL20 (134 aa).

It belongs to the bacterial ribosomal protein bL20 family.

Functionally, binds directly to 23S ribosomal RNA and is necessary for the in vitro assembly process of the 50S ribosomal subunit. It is not involved in the protein synthesizing functions of that subunit. This Rhizobium rhizogenes (strain K84 / ATCC BAA-868) (Agrobacterium radiobacter) protein is Large ribosomal subunit protein bL20.